Here is a 342-residue protein sequence, read N- to C-terminus: S-adenosylmethionine:tRNA ribosyltransferase-isomerase (342 aa).

Belongs to the QueA family. In terms of assembly, monomer.

The protein localises to the cytoplasm. It catalyses the reaction 7-aminomethyl-7-carbaguanosine(34) in tRNA + S-adenosyl-L-methionine = epoxyqueuosine(34) in tRNA + adenine + L-methionine + 2 H(+). Its pathway is tRNA modification; tRNA-queuosine biosynthesis. Functionally, transfers and isomerizes the ribose moiety from AdoMet to the 7-aminomethyl group of 7-deazaguanine (preQ1-tRNA) to give epoxyqueuosine (oQ-tRNA). This is S-adenosylmethionine:tRNA ribosyltransferase-isomerase from Listeria monocytogenes serotype 4b (strain CLIP80459).